An 89-amino-acid chain; its full sequence is Small ribosomal subunit protein bS16 (89 aa).

This sequence belongs to the bacterial ribosomal protein bS16 family.

In Gloeobacter violaceus (strain ATCC 29082 / PCC 7421), this protein is Small ribosomal subunit protein bS16.